A 700-amino-acid chain; its full sequence is UvrABC system protein C (700 aa).

Residues 11 to 90 (TTPGVYLYKD…IKKHRPRYNI (80 aa)) enclose the GIY-YIG domain. A UVR domain is found at 200–235 (TELIDMLRADMQAASDALEFEEAALLRDQLQAVERT).

The protein belongs to the UvrC family. Interacts with UvrB in an incision complex.

The protein resides in the cytoplasm. Functionally, the UvrABC repair system catalyzes the recognition and processing of DNA lesions. UvrC both incises the 5' and 3' sides of the lesion. The N-terminal half is responsible for the 3' incision and the C-terminal half is responsible for the 5' incision. In Oleidesulfovibrio alaskensis (strain ATCC BAA-1058 / DSM 17464 / G20) (Desulfovibrio alaskensis), this protein is UvrABC system protein C.